The primary structure comprises 174 residues: Large ribosomal subunit protein uL10 (174 aa).

This sequence belongs to the universal ribosomal protein uL10 family. Part of the ribosomal stalk of the 50S ribosomal subunit. The N-terminus interacts with L11 and the large rRNA to form the base of the stalk. The C-terminus forms an elongated spine to which L12 dimers bind in a sequential fashion forming a multimeric L10(L12)X complex.

Its function is as follows. Forms part of the ribosomal stalk, playing a central role in the interaction of the ribosome with GTP-bound translation factors. This is Large ribosomal subunit protein uL10 from Desulfovibrio desulfuricans (strain ATCC 27774 / DSM 6949 / MB).